The sequence spans 142 residues: Hemoglobin subunit alpha-A (142 aa).

One can recognise a Globin domain in the interval 2-142 (VLSANDKTNV…VGNVLTAKYR (141 aa)). Position 59 (His59) interacts with O2. His88 contacts heme b.

The protein belongs to the globin family. In terms of assembly, heterotetramer of two alpha chains and two beta chains. In terms of tissue distribution, red blood cells.

Involved in oxygen transport from the lung to the various peripheral tissues. This Aquila chrysaetos (Golden eagle) protein is Hemoglobin subunit alpha-A (HBAA).